The sequence spans 151 residues: Protein PLANT CADMIUM RESISTANCE 1 (151 aa).

A run of 2 helical transmembrane segments spans residues 31-47 (ITLC…AEIV) and 54-71 (CCAA…TSCG).

It belongs to the cornifelin family. In terms of assembly, homopentamer. As to expression, expressed in aerial part, but not in roots. Detected in the guard and mesophyll cells.

Its subcellular location is the cell membrane. Functionally, involved in glutathione-independent cadmium resistance. Reduces cadmium uptake rather than activating efflux, but is not closely coupled to calcium transporter. This is Protein PLANT CADMIUM RESISTANCE 1 (PCR1) from Arabidopsis thaliana (Mouse-ear cress).